The primary structure comprises 393 residues: MSGSSLPGALALSLLLVSGSLLPGPGAAQNAGFVKSPMSETKLTGDAFELYCDVVGSPTPEIQWWYAEVNRAESFRQLWDGARKRRVTVNTAYGSNGVSVLRITRLTLEDSGTYECRASNDPKRNDLRQNPSITWIRAQATISVLQKPRIVTSEEVIIRDSLLPVTLQCNLTSSSHTLMYSYWTKNGVELTATRKNASNMEYRINKPRAEDSGEYHCVYHFVSAPKANATIEVKAAPDITGHKRSENKNEGQDAMMYCKSVGYPHPEWMWRKKENGVFEEISNSSGRFFIINKENYTELNIVNLQITEDPGEYECNATNSIGSASVSTVLRVRSHLAPLWPFLGILAEIIILVVIIVVYEKRKRPDEVPDAGPMKTNSTNNHKDKNLRQRNTN.

A signal peptide spans 1 to 28 (MSGSSLPGALALSLLLVSGSLLPGPGAA). Ig-like domains lie at 29–134 (QNAG…PSIT), 148–234 (PRIV…IEVK), and 237–327 (PDIT…ASVS). Topologically, residues 29 to 338 (QNAGFVKSPM…VLRVRSHLAP (310 aa)) are extracellular. Cys-52 and Cys-116 form a disulfide bridge. The interval 149-161 (RIVTSEEVIIRDS) is narpin; mediates binding with FGFR1 and has antidepressant-like activity. An intrachain disulfide couples Cys-169 to Cys-217. 6 N-linked (GlcNAc...) asparagine glycosylation sites follow: Asn-170, Asn-196, Asn-228, Asn-283, Asn-295, and Asn-316. A disulfide bond links Cys-258 and Cys-315. Residues 339-359 (LWPFLGILAEIIILVVIIVVY) form a helical membrane-spanning segment. The Cytoplasmic segment spans residues 360–393 (EKRKRPDEVPDAGPMKTNSTNNHKDKNLRQRNTN). The segment at 366 to 393 (DEVPDAGPMKTNSTNNHKDKNLRQRNTN) is disordered.

Interacts with ATP2B1; this interaction stabilizes ATP2B1 and increases ATPase activity; this interaction controls T cell calcium homeostasis following T cell activation. Interacts with XKR8; promoting its localization at the cell membrane. Isoform 1 and isoform 2 are N-glycosylated. As to expression, isoform 1 is ubiquitously expressed. Isoform 2 is brain-specific. In brain isoform 2 is highly expressed in hippocampus and cerebral cortex and weakly in cerebellum and lower brain regions. In the hippocampus isoform 2 is found in the dentate gyrus and CA1-CA4, the striatum oriens of CA3 shows the higher level.

The protein resides in the cell membrane. The protein localises to the postsynaptic density. Functionally, probable homophilic and heterophilic cell adhesion molecule involved in long term potentiation at hippocampal excitatory synapses through activation of p38MAPK. May also regulate neurite outgrowth by activating the FGFR1 signaling pathway. May play a role in synaptic plasticity. Also acts as a chaperone for ATP2B1; stabilizes ATP2B1 and increases its ATPase activity. Promotes localization of XKR8 at the cell membrane. This is Neuroplastin (Nptn) from Rattus norvegicus (Rat).